Consider the following 482-residue polypeptide: ATP synthase subunit beta (482 aa).

161–168 (GGAGVGKT) serves as a coordination point for ATP.

This sequence belongs to the ATPase alpha/beta chains family. As to quaternary structure, F-type ATPases have 2 components, CF(1) - the catalytic core - and CF(0) - the membrane proton channel. CF(1) has five subunits: alpha(3), beta(3), gamma(1), delta(1), epsilon(1). CF(0) has four main subunits: a(1), b(1), b'(1) and c(9-12).

The protein localises to the cellular thylakoid membrane. It catalyses the reaction ATP + H2O + 4 H(+)(in) = ADP + phosphate + 5 H(+)(out). Its function is as follows. Produces ATP from ADP in the presence of a proton gradient across the membrane. The catalytic sites are hosted primarily by the beta subunits. This is ATP synthase subunit beta from Microcystis aeruginosa (strain NIES-843 / IAM M-2473).